The following is a 363-amino-acid chain: Hydroxycarboxylic acid receptor 2 (363 aa).

Residues 1 to 33 (MNRHHLQDHFLEIDKKNCCVFRDDFIVKVLPPV) lie on the Extracellular side of the membrane. The chain crosses the membrane as a helical span at residues 34–54 (LGLEFIFGLLGNGLALWIFCF). Over 55-63 (HLKSWKSSR) the chain is Cytoplasmic. The helical transmembrane segment at 64-84 (IFLFNLAVADFLLIICLPFLM) threads the bilayer. Residues 85 to 102 (DNYVRRWDWKFGDIPCRL) lie on the Extracellular side of the membrane. An intrachain disulfide couples Cys-100 to Cys-177. The chain crosses the membrane as a helical span at residues 103–123 (MLFMLAMNRQGSIIFLTVVAV). At 124-142 (DRYFRVVHPHHALNKISNR) the chain is on the cytoplasmic side. A helical membrane pass occupies residues 143-163 (TAAIISCLLWGITIGLTVHLL). Topologically, residues 164–192 (KKKMPIQNGGANLCSSFSICHTFQWHEAM) are extracellular. The helical transmembrane segment at 193 to 213 (FLLEFFLPLGIILFCSARIIW) threads the bilayer. Topologically, residues 214–229 (SLRQRQMDRHAKIKRA) are cytoplasmic. Residues 230 to 250 (ITFIMVVAIVFVICFLPSVVV) traverse the membrane as a helical segment. Topologically, residues 251-273 (RIRIFWLLHTSGTQNCEVYRSVD) are extracellular. Residues 274–294 (LAFFITLSFTYMNSMLDPVVY) form a helical membrane-spanning segment. The Cytoplasmic segment spans residues 295 to 363 (YFSSPSFPNF…SPSYLGPTSP (69 aa)). The segment at 319–363 (GEPDNNRSTSVELTGDPNKTRGAPEALMANSGEPWSPSYLGPTSP) is disordered. Ser-328 is modified (phosphoserine).

Belongs to the G-protein coupled receptor 1 family. Expression largely restricted to adipose tissue and spleen. Expressed on mature neutrophils but not on immature neutrophils or eosinophils.

The protein resides in the cell membrane. In terms of biological role, acts as a high affinity receptor for both nicotinic acid (also known as niacin) and (D)-beta-hydroxybutyrate and mediates increased adiponectin secretion and decreased lipolysis through G(i)-protein-mediated inhibition of adenylyl cyclase. This pharmacological effect requires nicotinic acid doses that are much higher than those provided by a normal diet. Mediates nicotinic acid-induced apoptosis in mature neutrophils. Receptor activation by nicotinic acid results in reduced cAMP levels which may affect activity of cAMP-dependent protein kinase A and phosphorylation of target proteins, leading to neutrophil apoptosis. The rank order of potency for the displacement of nicotinic acid binding is 5-methyl pyrazole-3-carboxylic acid = pyridine-3-acetic acid &gt; acifran &gt; 5-methyl nicotinic acid = acipimox &gt;&gt; nicotinuric acid = nicotinamide. This is Hydroxycarboxylic acid receptor 2 (HCAR2) from Homo sapiens (Human).